The chain runs to 28 residues: Dermaseptin-H2 (28 aa).

It belongs to the frog skin active peptide (FSAP) family. Dermaseptin subfamily. Expressed by the skin glands.

The protein resides in the secreted. In terms of biological role, possesses a potent antimicrobial activity against Gram-positive and Gram-negative bacteria. Probably acts by disturbing membrane functions with its amphipathic structure. This Pithecopus azureus (Orange-legged monkey tree frog) protein is Dermaseptin-H2.